The chain runs to 96 residues: Protein RnfH (96 aa).

The protein belongs to the UPF0125 (RnfH) family.

The chain is Protein RnfH from Escherichia coli O127:H6 (strain E2348/69 / EPEC).